The following is a 425-amino-acid chain: uncharacterized protein (425 aa).

One can recognise an HD domain in the interval 55 to 181; it reads RYSHSLGVYE…DLDADRMDYL (127 aa).

This is an uncharacterized protein from Mycoplasma pneumoniae (strain ATCC 29342 / M129 / Subtype 1) (Mycoplasmoides pneumoniae).